A 377-amino-acid chain; its full sequence is Glutamate 5-kinase (377 aa).

Position 17 (K17) interacts with ATP. Substrate is bound by residues S56, D143, and N155. 217–223 contributes to the ATP binding site; the sequence is SGGMFSK. The PUA domain maps to 282–360; it reads AGDLVIDDGA…CEIESILGKC (79 aa).

The protein belongs to the glutamate 5-kinase family.

Its subcellular location is the cytoplasm. It carries out the reaction L-glutamate + ATP = L-glutamyl 5-phosphate + ADP. The protein operates within amino-acid biosynthesis; L-proline biosynthesis; L-glutamate 5-semialdehyde from L-glutamate: step 1/2. In terms of biological role, catalyzes the transfer of a phosphate group to glutamate to form L-glutamate 5-phosphate. The chain is Glutamate 5-kinase from Maridesulfovibrio salexigens (strain ATCC 14822 / DSM 2638 / NCIMB 8403 / VKM B-1763) (Desulfovibrio salexigens).